The sequence spans 152 residues: UPF0225 protein Ent638_2310 (152 aa).

This sequence belongs to the UPF0225 family.

This Enterobacter sp. (strain 638) protein is UPF0225 protein Ent638_2310.